We begin with the raw amino-acid sequence, 957 residues long: SLIT and NTRK-like protein 5 (957 aa).

An N-terminal signal peptide occupies residues 1-40 (MHVCCPPVTLEQDLHRKMHSWMLQTLAFAVTSLVLSCAET). Residues 41-664 (IDYYGEICDN…GTGASSVPLS (624 aa)) lie on the Extracellular side of the membrane. LRR repeat units lie at residues 82–103 (PIYHLLLSGNLLSRLYPNEFVN), 106–127 (GASILHLGSNVIQDIETGAFHG), 130–151 (GLRRLHLNNNKLELLRDDTFLG), 154–175 (NLEYLQVDYNYISVIEPNAFGK), 178–199 (MLQVLILNDNLLSGLPNNLFRF), and 201–222 (PLTHLDLRGNRLKLLPYVGLLQ). Asn103 is a glycosylation site (N-linked (GlcNAc...) asparagine). An LRRCT 1 domain is found at 235–286 (NPWNCSCELISLKDWLDSISYSALVGDVVCETPFRLHGRDLDEVSKQELCPR). Residues 317 to 358 (ATSSSAVYKPPLKPPKGTRQPNKPRVRPTSRQPSKDLGYSNY) are disordered. Positions 365-407 (QTKSPVPLECPTACTCNLQISDLGLNVNCQERKIESIAELQPK) constitute an LRRNT domain. LRR repeat units lie at residues 410-431 (NPKKMYLTENYITVVRRTDFLE), 434-455 (GLDLLHLGNNRISMIQDRAFGD), 458-479 (NLRRLYLNGNRIERLSPELFYG), 482-503 (SLQYLFLQYNLIREIQAGTFDP), 506-527 (NLQLLFLNNNQLQAMPSGVFSG), and 529-550 (TLLRLNLRGNSFTSLPVSGVLD). In terms of domain architecture, LRRCT 2 spans 563–614 (NPWDCTCDVVGMKLWIEQLKVGVLVDEVICKAPKKFAETYMRSIKSELLCPD). The segment covering 623–632 (PTPSSIQVPS) has biased composition (low complexity). Positions 623–642 (PTPSSIQVPSRTNAATPAVR) are disordered. Asn644 is a glycosylation site (N-linked (GlcNAc...) asparagine). A helical membrane pass occupies residues 665-685 (VLILSLLLVFIMSVFVAAGLF). The Cytoplasmic segment spans residues 686–957 (VLVMKRRKKN…LEKQTTFSQF (272 aa)). The tract at residues 789–844 (SNHHLQQQPPPPPQQPQQQPPPQMQMQPGEEERRESHHLRSPAYSVSTIEPREDLL) is disordered. Pro residues predominate over residues 796 to 811 (QPPPPPQQPQQQPPPQ).

This sequence belongs to the SLITRK family. In the adult, significant expression is detected only in the brain. In the embryo, expressed in the subventricular zone, cortical plate, pyramidal layer of hippocampus, thalamus and hypothalamus.

Its subcellular location is the membrane. Functionally, suppresses neurite outgrowth. This Mus musculus (Mouse) protein is SLIT and NTRK-like protein 5 (Slitrk5).